Here is a 398-residue protein sequence, read N- to C-terminus: 1-deoxy-D-xylulose 5-phosphate reductoisomerase (398 aa).

Residues Thr11, Gly12, Ser13, Ile14, and Asn125 each coordinate NADPH. Lys126 contacts 1-deoxy-D-xylulose 5-phosphate. Glu127 provides a ligand contact to NADPH. Mn(2+) is bound at residue Asp151. Ser152, Glu153, Ser186, and His209 together coordinate 1-deoxy-D-xylulose 5-phosphate. Residue Glu153 coordinates Mn(2+). Gly215 is an NADPH binding site. 4 residues coordinate 1-deoxy-D-xylulose 5-phosphate: Ser222, Asn227, Lys228, and Glu231. Glu231 is a binding site for Mn(2+).

It belongs to the DXR family. It depends on Mg(2+) as a cofactor. The cofactor is Mn(2+).

It carries out the reaction 2-C-methyl-D-erythritol 4-phosphate + NADP(+) = 1-deoxy-D-xylulose 5-phosphate + NADPH + H(+). It functions in the pathway isoprenoid biosynthesis; isopentenyl diphosphate biosynthesis via DXP pathway; isopentenyl diphosphate from 1-deoxy-D-xylulose 5-phosphate: step 1/6. Its function is as follows. Catalyzes the NADPH-dependent rearrangement and reduction of 1-deoxy-D-xylulose-5-phosphate (DXP) to 2-C-methyl-D-erythritol 4-phosphate (MEP). In Acinetobacter baylyi (strain ATCC 33305 / BD413 / ADP1), this protein is 1-deoxy-D-xylulose 5-phosphate reductoisomerase.